The following is a 283-amino-acid chain: Isochorismatase domain-containing protein 1 (283 aa).

The protein belongs to the isochorismatase family.

The sequence is that of Isochorismatase domain-containing protein 1 (isoc1) from Danio rerio (Zebrafish).